Reading from the N-terminus, the 286-residue chain is Ribosome-inactivating protein momordin I (286 aa).

Positions 1–23 are cleaved as a signal peptide; that stretch reads MSRFSVLSFLILAIFLGGSIVKG. Glutamate 183 is an active-site residue. Residue asparagine 250 is glycosylated (N-linked (GlcNAc...) asparagine). Positions 270–286 are cleaved as a propeptide — removed in mature form; the sequence is AEGDNGDVSTTHGFSSY.

It belongs to the ribosome-inactivating protein family. Type 1 RIP subfamily.

It catalyses the reaction Endohydrolysis of the N-glycosidic bond at one specific adenosine on the 28S rRNA.. This is Ribosome-inactivating protein momordin I from Momordica charantia (Bitter gourd).